The primary structure comprises 265 residues: Phosphatidylglycerol--prolipoprotein diacylglyceryl transferase (265 aa).

4 consecutive transmembrane segments (helical) span residues L17 to G37, L56 to Y76, W92 to F112, and G117 to A137. Position 139 (R139) interacts with a 1,2-diacyl-sn-glycero-3-phospho-(1'-sn-glycerol). 3 helical membrane-spanning segments follow: residues P173–Y193, G201–V221, and W235–A255.

The protein belongs to the Lgt family.

The protein localises to the cell inner membrane. The catalysed reaction is L-cysteinyl-[prolipoprotein] + a 1,2-diacyl-sn-glycero-3-phospho-(1'-sn-glycerol) = an S-1,2-diacyl-sn-glyceryl-L-cysteinyl-[prolipoprotein] + sn-glycerol 1-phosphate + H(+). Its pathway is protein modification; lipoprotein biosynthesis (diacylglyceryl transfer). Catalyzes the transfer of the diacylglyceryl group from phosphatidylglycerol to the sulfhydryl group of the N-terminal cysteine of a prolipoprotein, the first step in the formation of mature lipoproteins. The polypeptide is Phosphatidylglycerol--prolipoprotein diacylglyceryl transferase (Solidesulfovibrio magneticus (strain ATCC 700980 / DSM 13731 / RS-1) (Desulfovibrio magneticus)).